Reading from the N-terminus, the 156-residue chain is Cyclic pyranopterin monophosphate synthase (156 aa).

Residues 75-77 (LCH) and 111-112 (ME) each bind substrate. Residue Asp-126 is part of the active site.

It belongs to the MoaC family. As to quaternary structure, homohexamer; trimer of dimers.

The enzyme catalyses (8S)-3',8-cyclo-7,8-dihydroguanosine 5'-triphosphate = cyclic pyranopterin phosphate + diphosphate. The protein operates within cofactor biosynthesis; molybdopterin biosynthesis. In terms of biological role, catalyzes the conversion of (8S)-3',8-cyclo-7,8-dihydroguanosine 5'-triphosphate to cyclic pyranopterin monophosphate (cPMP). The chain is Cyclic pyranopterin monophosphate synthase from Erythrobacter litoralis (strain HTCC2594).